The primary structure comprises 118 residues: Succinate dehydrogenase assembly factor 1, mitochondrial (118 aa).

An LYR motif 1; required for interaction with HSC20 motif is present at residues 14-16 (LYR). Positions 53–55 (LYR) match the LYR motif 2; not required for interaction with HSC20 motif. The interval 53–65 (LYRRGRRQLQMLR) is interaction with SDHB. The interval 72-118 (MGAFVRTRGPTEESNGAGAPGTLSGEGDDPRKPLDSMRTPKTPLDGR) is disordered.

Belongs to the complex I LYR family. SDHAF1 subfamily. In terms of assembly, interacts with SDHB within an SDHA-SDHB subcomplex. Also interacts with the iron-sulfur transfer complex formed by HSC20, HSPA9 and ISCU through direct binding to HSC20. Binding of SDHAF1 to SDHB precedes and is necessary for recruitment of the iron-sulfur transfer complex by SDHAF1.

The protein localises to the mitochondrion matrix. Functionally, plays an essential role in the assembly of succinate dehydrogenase (SDH), an enzyme complex (also referred to as respiratory complex II) that is a component of both the tricarboxylic acid (TCA) cycle and the mitochondrial electron transport chain, and which couples the oxidation of succinate to fumarate with the reduction of ubiquinone (coenzyme Q) to ubiquinol. Promotes maturation of the iron-sulfur protein subunit SDHB of the SDH catalytic dimer, protecting it from the deleterious effects of oxidants. May act together with SDHAF3. Contributes to iron-sulfur cluster incorporation into SDHB by binding to SDHB and recruiting the iron-sulfur transfer complex formed by HSC20, HSPA9 and ISCU through direct binding to HSC20. This chain is Succinate dehydrogenase assembly factor 1, mitochondrial, found in Bos taurus (Bovine).